Reading from the N-terminus, the 183-residue chain is Glutathione-regulated potassium-efflux system ancillary protein KefG (183 aa).

The protein belongs to the NAD(P)H dehydrogenase (quinone) family. KefG subfamily. As to quaternary structure, interacts with KefB.

The protein localises to the cell inner membrane. The catalysed reaction is a quinone + NADH + H(+) = a quinol + NAD(+). The enzyme catalyses a quinone + NADPH + H(+) = a quinol + NADP(+). Its function is as follows. Regulatory subunit of a potassium efflux system that confers protection against electrophiles. Required for full activity of KefB. The polypeptide is Glutathione-regulated potassium-efflux system ancillary protein KefG (Escherichia coli O6:K15:H31 (strain 536 / UPEC)).